A 495-amino-acid polypeptide reads, in one-letter code: Cytochrome P450 2E1 (495 aa).

298-303 provides a ligand contact to substrate; the sequence is FAGTET. C437 is a binding site for heme.

It belongs to the cytochrome P450 family. Interacts with chaperones HSP70 and HSP90; this interaction is required for initial targeting to mitochondria. It depends on heme as a cofactor.

The protein localises to the endoplasmic reticulum membrane. The protein resides in the microsome membrane. It localises to the mitochondrion inner membrane. It carries out the reaction an organic molecule + reduced [NADPH--hemoprotein reductase] + O2 = an alcohol + oxidized [NADPH--hemoprotein reductase] + H2O + H(+). The catalysed reaction is (5Z,8Z,11Z)-eicosatrienoate + reduced [NADPH--hemoprotein reductase] + O2 = 19-hydroxy-(5Z,8Z,11Z)-eicosatrienoate + oxidized [NADPH--hemoprotein reductase] + H2O + H(+). It catalyses the reaction (5Z,8Z,11Z,14Z,17Z)-eicosapentaenoate + reduced [NADPH--hemoprotein reductase] + O2 = 19-hydroxy-(5Z,8Z,11Z,14Z,17Z)-eicosapentaenoate + oxidized [NADPH--hemoprotein reductase] + H2O + H(+). The enzyme catalyses (4Z,7Z,10Z,13Z,16Z,19Z)-docosahexaenoate + reduced [NADPH--hemoprotein reductase] + O2 = 21-hydroxy-(4Z,7Z,10Z,13Z,16Z,19Z)-docosahexaenoate + oxidized [NADPH--hemoprotein reductase] + H2O + H(+). It carries out the reaction dodecanoate + reduced [NADPH--hemoprotein reductase] + O2 = 11-hydroxydodecanoate + oxidized [NADPH--hemoprotein reductase] + H2O + H(+). The catalysed reaction is tetradecanoate + reduced [NADPH--hemoprotein reductase] + O2 = 13-hydroxytetradecanoate + oxidized [NADPH--hemoprotein reductase] + H2O + H(+). It catalyses the reaction 4-nitrophenol + NADPH + O2 + H(+) = 4-nitrocatechol + NADP(+) + H2O. Its pathway is lipid metabolism; fatty acid metabolism. Its activity is regulated as follows. The omega-1 hydroxylase activity is stimulated by cytochrome b5. Its function is as follows. A cytochrome P450 monooxygenase involved in the metabolism of fatty acids. Mechanistically, uses molecular oxygen inserting one oxygen atom into a substrate, and reducing the second into a water molecule, with two electrons provided by NADPH via cytochrome P450 reductase (NADPH--hemoprotein reductase). Catalyzes the hydroxylation of carbon-hydrogen bonds. Hydroxylates fatty acids specifically at the omega-1 position displaying the highest catalytic activity for saturated fatty acids. May be involved in the oxidative metabolism of xenobiotics. In Bos taurus (Bovine), this protein is Cytochrome P450 2E1 (CYP2E1).